A 392-amino-acid chain; its full sequence is Na(+)/H(+) antiporter NhaA 2 (392 aa).

A run of 11 helical transmembrane segments spans residues 20–40, 63–83, 99–119, 127–147, 158–178, 181–201, 209–229, 265–285, 298–318, 336–356, and 365–385; these read FFAAEAAGGLILMAAALAALI, VEHWINDGLMAIFFMLVGLEI, ALPGFAALGGMVVPALIYVAF, IGGWAIPAATDIAFALGVLSL, IFLSALAILDDLGAVLIIALF, SDLSIPMLLAALGSIAVLVAL, LLPYLIVGALLWFFMLQSGIH, VAFAVVPVFGFANAGVSLSGI, VALGLLIGKQVGIFALAALAI, GVAALCGIGFTMSLFIGALAF, and EVKVGVLIGSVLSALLGVVVL.

The protein belongs to the NhaA Na(+)/H(+) (TC 2.A.33) antiporter family.

The protein resides in the cell inner membrane. It catalyses the reaction Na(+)(in) + 2 H(+)(out) = Na(+)(out) + 2 H(+)(in). In terms of biological role, na(+)/H(+) antiporter that extrudes sodium in exchange for external protons. The protein is Na(+)/H(+) antiporter NhaA 2 of Pseudomonas savastanoi pv. phaseolicola (strain 1448A / Race 6) (Pseudomonas syringae pv. phaseolicola (strain 1448A / Race 6)).